Consider the following 314-residue polypeptide: 4-hydroxy-3-methylbut-2-enyl diphosphate reductase (314 aa).

Residue cysteine 12 participates in [4Fe-4S] cluster binding. The (2E)-4-hydroxy-3-methylbut-2-enyl diphosphate site is built by histidine 41 and histidine 74. Residues histidine 41 and histidine 74 each coordinate dimethylallyl diphosphate. Residues histidine 41 and histidine 74 each coordinate isopentenyl diphosphate. Cysteine 96 is a binding site for [4Fe-4S] cluster. Residue histidine 124 participates in (2E)-4-hydroxy-3-methylbut-2-enyl diphosphate binding. Histidine 124 lines the dimethylallyl diphosphate pocket. Isopentenyl diphosphate is bound at residue histidine 124. Glutamate 126 acts as the Proton donor in catalysis. Position 168 (threonine 168) interacts with (2E)-4-hydroxy-3-methylbut-2-enyl diphosphate. Cysteine 198 provides a ligand contact to [4Fe-4S] cluster. (2E)-4-hydroxy-3-methylbut-2-enyl diphosphate contacts are provided by serine 226, serine 227, asparagine 228, and serine 270. Dimethylallyl diphosphate is bound by residues serine 226, serine 227, asparagine 228, and serine 270. Isopentenyl diphosphate is bound by residues serine 226, serine 227, asparagine 228, and serine 270.

This sequence belongs to the IspH family. Requires [4Fe-4S] cluster as cofactor.

The catalysed reaction is isopentenyl diphosphate + 2 oxidized [2Fe-2S]-[ferredoxin] + H2O = (2E)-4-hydroxy-3-methylbut-2-enyl diphosphate + 2 reduced [2Fe-2S]-[ferredoxin] + 2 H(+). The enzyme catalyses dimethylallyl diphosphate + 2 oxidized [2Fe-2S]-[ferredoxin] + H2O = (2E)-4-hydroxy-3-methylbut-2-enyl diphosphate + 2 reduced [2Fe-2S]-[ferredoxin] + 2 H(+). The protein operates within isoprenoid biosynthesis; dimethylallyl diphosphate biosynthesis; dimethylallyl diphosphate from (2E)-4-hydroxy-3-methylbutenyl diphosphate: step 1/1. Its pathway is isoprenoid biosynthesis; isopentenyl diphosphate biosynthesis via DXP pathway; isopentenyl diphosphate from 1-deoxy-D-xylulose 5-phosphate: step 6/6. In terms of biological role, catalyzes the conversion of 1-hydroxy-2-methyl-2-(E)-butenyl 4-diphosphate (HMBPP) into a mixture of isopentenyl diphosphate (IPP) and dimethylallyl diphosphate (DMAPP). Acts in the terminal step of the DOXP/MEP pathway for isoprenoid precursor biosynthesis. The chain is 4-hydroxy-3-methylbut-2-enyl diphosphate reductase from Ectopseudomonas mendocina (strain ymp) (Pseudomonas mendocina).